Consider the following 65-residue polypeptide: Protein translocase subunit SecE (65 aa).

Residues 1–27 lie on the Cytoplasmic side of the membrane; it reads MEKLKEFLKGVRDELKRVVWPSRELVV. A helical transmembrane segment spans residues 28–59; that stretch reads KATISVIIFSLAIGVYLWILDLTFTKIISFIL. Over 60–65 the chain is Periplasmic; sequence SLRGSL.

This sequence belongs to the SecE/SEC61-gamma family. As to quaternary structure, component of the Sec protein translocase complex. Heterotrimer consisting of SecY, SecE and SecG subunits. The heterotrimers can form oligomers, although 1 heterotrimer is thought to be able to translocate proteins. Interacts with SecDF, and other proteins may be involved. The channel interacts with SecA via subunit SecY.

It is found in the cell inner membrane. In terms of biological role, essential subunit of the protein translocation channel SecYEG. Clamps together the 2 halves of SecY. May contact the channel plug during translocation. The protein is Protein translocase subunit SecE of Aquifex aeolicus (strain VF5).